The sequence spans 441 residues: AP-2 complex subunit mu (441 aa).

Residues 174–440 (RNELFLDVIE…IGRSGLYETR (267 aa)) form the MHD domain.

Belongs to the adapter complexes medium subunit family. Adapter protein complex 2 (AP-2) is a heterotetramer composed of two large adaptins (alpha-type subunit and beta-type subunits), a medium adaptin (mu-type subunit AP50) and a small adaptin (sigma-type subunit AP17). Brain, heart, lung, liver, testis and spleen.

Its subcellular location is the cell membrane. The protein localises to the membrane. It is found in the coated pit. Component of the adapter complexes which link clathrin to receptors in coated vesicles. Clathrin-associated protein complexes are believed to interact with the cytoplasmic tails of membrane proteins, leading to their selection and concentration. AP50 is a subunit of the plasma membrane adapter. Essential wnt/egl-20 signaling protein that functions in wnt/egl-20-producing cells. Required for the AP-2 complex-mediated endocytosis of membrane proteins including wntless homolog mig-14 in egl-20-producing cells. During development, regulates the migration of HSN neurons and the left and right Q neuroblasts (QL and QR, respectively) and their descendants, possibly through hox gene and wnt/egl-20 gene target mab-5, and plays a role in establishing ALM and PLM neuronal cell polarity. Regulates AWB sensory neuron cilia membrane expansion during development, potentially via localization of tub-1 and PtdIns(4,5)P2 to the ciliary base. Required for the asymmetric divisions of V5 cells. This is AP-2 complex subunit mu (dpy-23) from Caenorhabditis elegans.